Consider the following 3387-residue polypeptide: Genome polyprotein (3387 aa).

The Cytoplasmic portion of the chain corresponds to 1–100 (MNQRKKVVRP…LNILNGRKRS (100 aa)). The interval 36-71 (LFSGKGPLRMVLAFITFLRVLSIPPTAGILKRWGQL) is hydrophobic; homodimerization of capsid protein C. The propeptide at 100–113 (STMTLLCLIPTVMA) is ER anchor for the capsid protein C, removed in mature form by serine protease NS3. A helical membrane pass occupies residues 101–117 (TMTLLCLIPTVMAFHLS). Over 118–237 (TRDGEPLMIV…GAWKHAQRVE (120 aa)) the chain is Extracellular. Asn182 carries N-linked (GlcNAc...) asparagine; by host glycosylation. The helical transmembrane segment at 238 to 258 (SWILRNPGFALLAGFMAYMIG) threads the bilayer. Over 259-265 (QTGIQRT) the chain is Cytoplasmic. Residues 266 to 279 (VFFVLMMLVAPSYG) traverse the membrane as a helical segment. Residues 280 to 723 (MRCVGVGNRD…AVHQVFGSVY (444 aa)) are Extracellular-facing. Disulfide bonds link Cys282-Cys309, Cys339-Cys400, Cys353-Cys384, and Cys371-Cys395. The N-linked (GlcNAc...) asparagine; by host glycan is linked to Asn346. Residues 377–390 (DRGWGNGCGLFGKG) are fusion peptide. Residue Asn432 is glycosylated (N-linked (GlcNAc...) asparagine; by host). Disulfide bonds link Cys464/Cys564 and Cys581/Cys612. The chain crosses the membrane as a helical span at residues 724-744 (TTMFGGVSWMVRILIGFLVLW). The Cytoplasmic portion of the chain corresponds to 745-750 (IGTNSR). The helical transmembrane segment at 751–771 (NTSMAMTCIAVGGITLFLGFT) threads the bilayer. At 772-1194 (VQADMGCVVS…MLGDTMSGRI (423 aa)) the chain is on the extracellular side. 6 cysteine pairs are disulfide-bonded: Cys778–Cys789, Cys829–Cys917, Cys953–Cys997, Cys1054–Cys1103, Cys1065–Cys1087, and Cys1086–Cys1090. 2 N-linked (GlcNAc...) asparagine; by host glycosylation sites follow: Asn904 and Asn981. Residues 1195 to 1218 (GGQVHLAIMAVFKMSPGYVLGVFL) form a helical membrane-spanning segment. Over 1219 to 1224 (RKLTSR) the chain is Lumenal. Residues 1225-1243 (ETALMVIGMAMTTVLSIPH) traverse the membrane as a helical segment. Residues 1244 to 1267 (DLMELIDGISLGLILLKIVTQFDN) lie on the Cytoplasmic side of the membrane. The helical transmembrane segment at 1268 to 1288 (TQVGTLALSLTFIRSTMPLVM) threads the bilayer. A topological domain (lumenal) is located at residue Ala1289. The chain crosses the membrane as a helical span at residues 1290–1308 (WRTIMAVLFVVTLIPLCRT). Residues 1309 to 1316 (SCLQKQSH) are Lumenal-facing. The chain crosses the membrane as a helical span at residues 1317-1337 (WVEITALILGAQALPVYLMTL). The Cytoplasmic segment spans residues 1338–1345 (MKGASRRS). Residues 1346-1366 (WPLNEGIMAVGLVSLLGSALL) traverse the membrane as a helical segment. The Lumenal portion of the chain corresponds to 1367–1369 (KND). Residues 1370-1390 (VPLAGPMVAGGLLLAAYVMSG) form a helical membrane-spanning segment. The Cytoplasmic segment spans residues 1391–1437 (SSADLSLEKAANVQWDEMADITGSSPIIEVKQDEDGSFSIRDVEETN). Residues 1397-1436 (LEKAANVQWDEMADITGSSPIIEVKQDEDGSFSIRDVEET) are interacts with and activates NS3 protease. The helical intramembrane region spans 1438–1458 (MITLLVKLALITVSGLYPLAI). The Cytoplasmic portion of the chain corresponds to 1459–2143 (PVTMTLWYMW…QHALNELPES (685 aa)). The 178-residue stretch at 1475–1652 (SGALWDVPSP…ERIGEPDYEV (178 aa)) folds into the Peptidase S7 domain. Catalysis depends on charge relay system; for serine protease NS3 activity residues His1525, Asp1549, and Ser1609. The Helicase ATP-binding domain occupies 1654–1810 (EDIFRKKRLT…QSNSPIEDIE (157 aa)). Residues 1658-1661 (RKKR) form an important for RNA-binding region. 1667–1674 (LHPGAGKT) contacts ATP. Positions 1758–1761 (DEAH) match the DEAH box motif. A Helicase C-terminal domain is found at 1820-1987 (TGFDWITDYQ…IIPTLFGPER (168 aa)). An N6-acetyllysine; by host modification is found at Lys1862. A helical membrane pass occupies residues 2144–2164 (LETLMLVALLGAMTAGTFLFF). The Lumenal portion of the chain corresponds to 2165–2169 (MQGKG). The segment at residues 2170 to 2190 (IGKLSMGLITIAVASGLLWVA) is an intramembrane region (helical). A topological domain (lumenal) is located at residue Glu2191. The helical transmembrane segment at 2192–2212 (LQPQWIAASIILEFFLMVLLI) threads the bilayer. At 2213–2225 (PEPEKQRTPQDNQ) the chain is on the cytoplasmic side. Residues 2226–2246 (LIYVILTILTIIGLIAANEMG) traverse the membrane as a helical segment. Topologically, residues 2247–2270 (LIEKTKTDFGFYQVKTETTILDVD) are lumenal. The helical intramembrane region spans 2271 to 2291 (LRPASAWTLYAVATTILTPML). The Lumenal segment spans residues 2292-2301 (RHTIENTSAN). N-linked (GlcNAc...) asparagine; by host glycans are attached at residues Asn2297 and Asn2301. Residues 2302–2322 (LSLAAIANQAAVLMGLGKGWP) constitute an intramembrane region (helical). At 2323–2343 (LHRVDLGVPLLAMGCYSQVNP) the chain is on the lumenal side. The chain crosses the membrane as a helical span at residues 2344–2364 (TTLTASLVMLLVHYAIIGPGL). Over 2365–2409 (QAKATREAQKRTAAGIMKNPTVDGITVIDLEPISYDPKFEKQLGQ) the chain is Cytoplasmic. A helical transmembrane segment spans residues 2410–2430 (VMLLVLCAGQLLLMRTTWAFC). The Lumenal portion of the chain corresponds to 2431-2455 (EVLTLATGPILTLWEGNPGRFWNTT). An N-linked (GlcNAc...) asparagine; by host glycan is attached at Asn2453. The chain crosses the membrane as a helical span at residues 2456–2476 (IAVSTANIFRGSYLAGAGLAF). The Cytoplasmic segment spans residues 2477 to 3387 (SLIKNAQTPR…SAPSESEGVL (911 aa)). Residues 2489-2751 (TGTTGETLGE…DVDLGAGTRS (263 aa)) enclose the mRNA cap 0-1 NS5-type MT domain. Ser2543 contacts S-adenosyl-L-methionine. Residue Ser2543 is modified to Phosphoserine. Lys2548 (for 2'-O-MTase activity) is an active-site residue. Residues 2564–2567 (VVDL) carry the SUMO-interacting motif motif. Gly2573, Trp2574, Thr2591, Lys2592, Asp2618, and Val2619 together coordinate S-adenosyl-L-methionine. Asp2633 functions as the For 2'-O-MTase activity in the catalytic mechanism. Ile2634 contributes to the S-adenosyl-L-methionine binding site. Active-site for 2'-O-MTase activity residues include Lys2668 and Glu2704. Tyr2706 is an S-adenosyl-L-methionine binding site. The Zn(2+) site is built by Glu2925, His2929, Cys2934, and Cys2937. The 151-residue stretch at 3016–3166 (LMYADDTAGW…PLDERFSTSL (151 aa)) folds into the RdRp catalytic domain. 3 residues coordinate Zn(2+): His3200, Cys3216, and Cys3335.

In the N-terminal section; belongs to the class I-like SAM-binding methyltransferase superfamily. mRNA cap 0-1 NS5-type methyltransferase family. As to quaternary structure, homodimer. Interacts (via N-terminus) with host EXOC1 (via C-terminus); this interaction results in EXOC1 degradation through the proteasome degradation pathway. In terms of assembly, forms heterodimers with envelope protein E in the endoplasmic reticulum and Golgi. Homodimer; in the endoplasmic reticulum and Golgi. Interacts with protein prM. Interacts with non-structural protein 1. As to quaternary structure, homodimer; Homohexamer when secreted. Interacts with envelope protein E. In terms of assembly, interacts (via N-terminus) with serine protease NS3. Forms a heterodimer with serine protease NS3. May form homooligomers. As to quaternary structure, forms a heterodimer with NS2B. Interacts with NS4B. Interacts with unphosphorylated RNA-directed RNA polymerase NS5; this interaction stimulates RNA-directed RNA polymerase NS5 guanylyltransferase activity. Interacts with host SHFL. In terms of assembly, interacts with host MAVS; this interaction inhibits the synthesis of IFN-beta. Interacts with host SHFL. Interacts with host AUP1; the interaction occurs in the presence of Dengue virus NS4B and induces lipophagy which facilitates production of virus progeny particles. Interacts with serine protease NS3. As to quaternary structure, homodimer. Interacts with host STAT2; this interaction inhibits the phosphorylation of the latter, and, when all viral proteins are present (polyprotein), targets STAT2 for degradation. Interacts with serine protease NS3. Interacts with host PAF1 complex; the interaction may prevent the recruitment of the PAF1 complex to interferon-responsive genes, and thus reduces the immune response. Specific enzymatic cleavages in vivo yield mature proteins. Cleavages in the lumen of endoplasmic reticulum are performed by host signal peptidase, whereas cleavages in the cytoplasmic side are performed by serine protease NS3. Signal cleavage at the 2K-4B site requires a prior NS3 protease-mediated cleavage at the 4A-2K site. Post-translationally, cleaved in post-Golgi vesicles by a host furin, releasing the mature small envelope protein M, and peptide pr. This cleavage is incomplete as up to 30% of viral particles still carry uncleaved prM. In terms of processing, N-glycosylated. N-glycosylated. The excreted form is glycosylated and this is required for efficient secretion of the protein from infected cells. Post-translationally, acetylated by host KAT5. Acetylation modulates NS3 RNA-binding and unwinding activities and plays an important positive role for viral replication. In terms of processing, sumoylation of RNA-directed RNA polymerase NS5 increases NS5 protein stability allowing proper viral RNA replication. Phosphorylated on serines residues. This phosphorylation may trigger NS5 nuclear localization.

The protein resides in the virion. The protein localises to the host nucleus. It is found in the host cytoplasm. It localises to the host perinuclear region. Its subcellular location is the secreted. The protein resides in the virion membrane. The protein localises to the host endoplasmic reticulum membrane. It is found in the host mitochondrion. It catalyses the reaction Selective hydrolysis of -Xaa-Xaa-|-Yaa- bonds in which each of the Xaa can be either Arg or Lys and Yaa can be either Ser or Ala.. The catalysed reaction is RNA(n) + a ribonucleoside 5'-triphosphate = RNA(n+1) + diphosphate. It carries out the reaction a ribonucleoside 5'-triphosphate + H2O = a ribonucleoside 5'-diphosphate + phosphate + H(+). The enzyme catalyses ATP + H2O = ADP + phosphate + H(+). It catalyses the reaction a 5'-end (5'-triphosphoguanosine)-ribonucleoside in mRNA + S-adenosyl-L-methionine = a 5'-end (N(7)-methyl 5'-triphosphoguanosine)-ribonucleoside in mRNA + S-adenosyl-L-homocysteine. The catalysed reaction is a 5'-end (N(7)-methyl 5'-triphosphoguanosine)-ribonucleoside in mRNA + S-adenosyl-L-methionine = a 5'-end (N(7)-methyl 5'-triphosphoguanosine)-(2'-O-methyl-ribonucleoside) in mRNA + S-adenosyl-L-homocysteine + H(+). Plays a role in virus budding by binding to the cell membrane and gathering the viral RNA into a nucleocapsid that forms the core of a mature virus particle. During virus entry, may induce genome penetration into the host cytoplasm after hemifusion induced by the surface proteins. Can migrate to the cell nucleus where it modulates host functions. Overcomes the anti-viral effects of host EXOC1 by sequestering and degrading the latter through the proteasome degradation pathway. Functionally, inhibits RNA silencing by interfering with host Dicer. Its function is as follows. Prevents premature fusion activity of envelope proteins in trans-Golgi by binding to envelope protein E at pH6.0. After virion release in extracellular space, gets dissociated from E dimers. In terms of biological role, acts as a chaperone for envelope protein E during intracellular virion assembly by masking and inactivating envelope protein E fusion peptide. prM is the only viral peptide matured by host furin in the trans-Golgi network probably to avoid catastrophic activation of the viral fusion activity in acidic Golgi compartment prior to virion release. prM-E cleavage is inefficient, and many virions are only partially matured. These uncleaved prM would play a role in immune evasion. May play a role in virus budding. Exerts cytotoxic effects by activating a mitochondrial apoptotic pathway through M ectodomain. May display a viroporin activity. Functionally, binds to host cell surface receptor and mediates fusion between viral and cellular membranes. Envelope protein is synthesized in the endoplasmic reticulum in the form of heterodimer with protein prM. They play a role in virion budding in the ER, and the newly formed immature particle is covered with 60 spikes composed of heterodimer between precursor prM and envelope protein E. The virion is transported to the Golgi apparatus where the low pH causes dissociation of PrM-E heterodimers and formation of E homodimers. prM-E cleavage is inefficient, and many virions are only partially matured. These uncleaved prM would play a role in immune evasion. Its function is as follows. Involved in immune evasion, pathogenesis and viral replication. Once cleaved off the polyprotein, is targeted to three destinations: the viral replication cycle, the plasma membrane and the extracellular compartment. Essential for viral replication. Required for formation of the replication complex and recruitment of other non-structural proteins to the ER-derived membrane structures. Excreted as a hexameric lipoparticle that plays a role against host immune response. Antagonizing the complement function. Binds to the host macrophages and dendritic cells. Inhibits signal transduction originating from Toll-like receptor 3 (TLR3). In terms of biological role, disrupts the host endothelial glycocalyx layer of host pulmonary microvascular endothelial cells, inducing degradation of sialic acid and shedding of heparan sulfate proteoglycans. NS1 induces expression of sialidases, heparanase, and activates cathepsin L, which activates heparanase via enzymatic cleavage. These effects are probably linked to the endothelial hyperpermeability observed in severe dengue disease. Component of the viral RNA replication complex that functions in virion assembly and antagonizes the host immune response. Functionally, required cofactor for the serine protease function of NS3. May have membrane-destabilizing activity and form viroporins. Its function is as follows. Displays three enzymatic activities: serine protease, NTPase and RNA helicase. NS3 serine protease, in association with NS2B, performs its autocleavage and cleaves the polyprotein at dibasic sites in the cytoplasm: C-prM, NS2A-NS2B, NS2B-NS3, NS3-NS4A, NS4A-2K and NS4B-NS5. NS3 RNA helicase binds RNA and unwinds dsRNA in the 3' to 5' direction. In terms of biological role, regulates the ATPase activity of the NS3 helicase activity. NS4A allows NS3 helicase to conserve energy during unwinding. Plays a role in the inhibition of the host innate immune response. Interacts with host MAVS and thereby prevents the interaction between RIGI and MAVS. In turn, IFN-beta production is impaired. Interacts with host AUP1 which mediates induction of lipophagy in host cells and facilitates production of virus progeny particles. Functions as a signal peptide for NS4B and is required for the interferon antagonism activity of the latter. Functionally, induces the formation of ER-derived membrane vesicles where the viral replication takes place. Inhibits interferon (IFN)-induced host STAT1 phosphorylation and nuclear translocation, thereby preventing the establishment of cellular antiviral state by blocking the IFN-alpha/beta pathway. Its function is as follows. Replicates the viral (+) and (-) RNA genome, and performs the capping of genomes in the cytoplasm. NS5 methylates viral RNA cap at guanine N-7 and ribose 2'-O positions. Besides its role in RNA genome replication, also prevents the establishment of cellular antiviral state by blocking the interferon-alpha/beta (IFN-alpha/beta) signaling pathway. Inhibits host TYK2 and STAT2 phosphorylation, thereby preventing activation of JAK-STAT signaling pathway. May reduce immune responses by preventing the recruitment of the host PAF1 complex to interferon-responsive genes. The chain is Genome polyprotein from Dengue virus type 4 (strain Singapore/8976/1995) (DENV-4).